We begin with the raw amino-acid sequence, 130 residues long: Small ribosomal subunit protein uS9 (130 aa).

This sequence belongs to the universal ribosomal protein uS9 family.

This chain is Small ribosomal subunit protein uS9, found in Aliivibrio salmonicida (strain LFI1238) (Vibrio salmonicida (strain LFI1238)).